A 225-amino-acid chain; its full sequence is MDVVFALGGSVLMPKEGASTENIQNYAKAFKKLKEMGHRVSVVVGGGNTARQYISVAREFANESFCDEIGILATRMNSMLLISALGKDAVKQVPENFKDAEIILNMDKILVMGGTHPAHTTDAVSATLAEFIDADLLVIATNVDGVYNKDPRCNENAVKLDKINTKELLEITGSSSMSAGSSGVVDPLASKIIDRAKLKTIVVKGIPEEILASVTGNHNGTTITP.

9 to 10 (GS) lines the ATP pocket. Residue glycine 46 participates in UMP binding. Positions 47 and 51 each coordinate ATP. UMP is bound by residues aspartate 67 and 115–121 (THPAHTT). Residues threonine 141, asparagine 142, tyrosine 147, and aspartate 150 each contribute to the ATP site.

The protein belongs to the UMP kinase family. Homohexamer.

The protein localises to the cytoplasm. It catalyses the reaction UMP + ATP = UDP + ADP. It functions in the pathway pyrimidine metabolism; CTP biosynthesis via de novo pathway; UDP from UMP (UMPK route): step 1/1. Its activity is regulated as follows. Inhibited by UTP. Its function is as follows. Catalyzes the reversible phosphorylation of UMP to UDP. The sequence is that of Uridylate kinase from Methanococcus maripaludis (strain DSM 14266 / JCM 13030 / NBRC 101832 / S2 / LL).